Reading from the N-terminus, the 362-residue chain is S-adenosylmethionine:tRNA ribosyltransferase-isomerase (362 aa).

The protein belongs to the QueA family. As to quaternary structure, monomer.

It is found in the cytoplasm. The enzyme catalyses 7-aminomethyl-7-carbaguanosine(34) in tRNA + S-adenosyl-L-methionine = epoxyqueuosine(34) in tRNA + adenine + L-methionine + 2 H(+). The protein operates within tRNA modification; tRNA-queuosine biosynthesis. Functionally, transfers and isomerizes the ribose moiety from AdoMet to the 7-aminomethyl group of 7-deazaguanine (preQ1-tRNA) to give epoxyqueuosine (oQ-tRNA). This is S-adenosylmethionine:tRNA ribosyltransferase-isomerase from Xanthobacter autotrophicus (strain ATCC BAA-1158 / Py2).